The following is a 221-amino-acid chain: Vesicle transport v-SNARE 11 (221 aa).

Position 2 is an N-acetylserine (S2). Topologically, residues 2–198 (SDVFDGYERQ…MTRRMNKNKW (197 aa)) are cytoplasmic. Residues 32–93 (EQKKQKLSEI…FKTEVKRITS (62 aa)) adopt a coiled-coil conformation. The chain crosses the membrane as a helical; Anchor for type IV membrane protein span at residues 199–219 (TIGAIIIALIAAIFIILYFKL). Residues 220–221 (TK) lie on the Vesicular side of the membrane.

The protein belongs to the VTI1 family. In terms of assembly, forms SNARE complexes with the t-SNAREs SYP51 and either SYP21 or SYP22 in the PVC, and with a much lower affinity with SYP61 in the TGN. Does not interact with SYP41, SYP42 or VPS45. Binds to EPSIN1. Interacts with SCYL2B. As to expression, expressed in roots, stems, flowers and leaves.

The protein resides in the golgi apparatus. Its subcellular location is the trans-Golgi network membrane. It localises to the prevacuolar compartment membrane. The protein localises to the vacuole membrane. In terms of biological role, functions as a v-SNARE responsible for targeting AtELP-containing vesicles from the trans-Golgi network (TGN) to the prevacuolar compartment (PVC) and mediates liposome fusion. May be also involved in retrograde traffic to the cis-Golgi. Promotes the formation of vacuolar membrane 'bulbs'. Necessary to deliver proteins to the lytic vacuole, but seems not involved in storage proteins transport. Required for amyloplast sedimentation in the endodermis during shoot gravitropism, which are thus acting as statoliths. Expression in the endodermis is essential for the shoot gravitropic response, whereas expression in other tissues may be responsible for the correct stem and leaf shape. The chain is Vesicle transport v-SNARE 11 from Arabidopsis thaliana (Mouse-ear cress).